Here is a 154-residue protein sequence, read N- to C-terminus: uncharacterized protein (154 aa).

This is an uncharacterized protein from Methanocaldococcus jannaschii (strain ATCC 43067 / DSM 2661 / JAL-1 / JCM 10045 / NBRC 100440) (Methanococcus jannaschii).